The following is a 59-amino-acid chain: Conotoxin ViVB (59 aa).

An N-terminal signal peptide occupies residues 1 to 22 (MRCVPVFIILLLLIPSAPSAAV). The propeptide occupies 23-46 (QPKTEKDDVPLASFHDSAMRILSR). Pyrrolidone carboxylic acid is present on glutamine 47. Valine amide is present on valine 58.

In terms of processing, contains 2 disulfide bonds that can be either 'C1-C3, C2-C4' or 'C1-C4, C2-C3', since these disulfide connectivities have been observed for conotoxins with cysteine framework V (for examples, see AC P0DQQ7 and AC P81755). In terms of tissue distribution, expressed by the venom duct.

It is found in the secreted. The sequence is that of Conotoxin ViVB from Conus virgo (Virgin cone).